A 425-amino-acid polypeptide reads, in one-letter code: Protein PTI1 (425 aa).

The residue at position 272 (S272) is a Phosphoserine.

Component of the cleavage and polyadenylation factor (CPF) complex, which is composed of PTI1, SYC1, SSU72, GLC7, MPE1, REF2, PFS2, PTA1, YSH1/BRR5, SWD2, CFT2/YDH1, YTH1, CFT1/YHH1, FIP1 and PAP1. Component of the APT complex, which is a subcomplex of CPF, and is composed of PTI1, SYC1, SSU72, GLC7, REF2, PTA1 and SWD2.

It localises to the nucleus. Its function is as follows. Component of the cleavage and polyadenylation factor (CPF) complex, which plays a key role in polyadenylation-dependent pre-mRNA 3'-end formation and cooperates with cleavage factors including the CFIA complex and NAB4/CFIB. Component of the APT complex, which may be involved in polyadenylation-independent transcript 3'-end formation. PTI1 is required for 3'-end formation of snoRNAs. In Saccharomyces cerevisiae (strain ATCC 204508 / S288c) (Baker's yeast), this protein is Protein PTI1 (PTI1).